We begin with the raw amino-acid sequence, 456 residues long: Bifunctional protein GlmU (456 aa).

The pyrophosphorylase stretch occupies residues Met-1–Arg-229. UDP-N-acetyl-alpha-D-glucosamine is bound by residues Leu-11 to Gly-14, Lys-25, Gln-76, Gly-81 to Thr-82, Tyr-103 to Asp-105, Gly-140, Glu-154, Asn-169, and Asn-227. Asp-105 lines the Mg(2+) pocket. Asn-227 contributes to the Mg(2+) binding site. A linker region spans residues Leu-230–Ser-250. Residues Gly-251–Lys-456 form an N-acetyltransferase region. UDP-N-acetyl-alpha-D-glucosamine-binding residues include Arg-333 and Lys-351. His-363 (proton acceptor) is an active-site residue. Residues Tyr-366 and Asn-377 each coordinate UDP-N-acetyl-alpha-D-glucosamine. Acetyl-CoA contacts are provided by residues Ala-380, Asn-386–Tyr-387, Ser-405, Ala-423, and Arg-440.

In the N-terminal section; belongs to the N-acetylglucosamine-1-phosphate uridyltransferase family. The protein in the C-terminal section; belongs to the transferase hexapeptide repeat family. As to quaternary structure, homotrimer. Mg(2+) serves as cofactor.

The protein localises to the cytoplasm. The enzyme catalyses alpha-D-glucosamine 1-phosphate + acetyl-CoA = N-acetyl-alpha-D-glucosamine 1-phosphate + CoA + H(+). The catalysed reaction is N-acetyl-alpha-D-glucosamine 1-phosphate + UTP + H(+) = UDP-N-acetyl-alpha-D-glucosamine + diphosphate. The protein operates within nucleotide-sugar biosynthesis; UDP-N-acetyl-alpha-D-glucosamine biosynthesis; N-acetyl-alpha-D-glucosamine 1-phosphate from alpha-D-glucosamine 6-phosphate (route II): step 2/2. It functions in the pathway nucleotide-sugar biosynthesis; UDP-N-acetyl-alpha-D-glucosamine biosynthesis; UDP-N-acetyl-alpha-D-glucosamine from N-acetyl-alpha-D-glucosamine 1-phosphate: step 1/1. It participates in bacterial outer membrane biogenesis; LPS lipid A biosynthesis. Catalyzes the last two sequential reactions in the de novo biosynthetic pathway for UDP-N-acetylglucosamine (UDP-GlcNAc). The C-terminal domain catalyzes the transfer of acetyl group from acetyl coenzyme A to glucosamine-1-phosphate (GlcN-1-P) to produce N-acetylglucosamine-1-phosphate (GlcNAc-1-P), which is converted into UDP-GlcNAc by the transfer of uridine 5-monophosphate (from uridine 5-triphosphate), a reaction catalyzed by the N-terminal domain. This Erwinia tasmaniensis (strain DSM 17950 / CFBP 7177 / CIP 109463 / NCPPB 4357 / Et1/99) protein is Bifunctional protein GlmU.